Consider the following 378-residue polypeptide: tRNA N(3)-cytidine methyltransferase METTL2 (378 aa).

S-adenosyl-L-methionine contacts are provided by Trp78, Tyr82, Gly188, Asp213, Asp239, Leu240, and Ile260.

Belongs to the methyltransferase superfamily. METL family. As to quaternary structure, monomer. Interacts with DALRD3.

The protein resides in the cytoplasm. It catalyses the reaction cytidine(32) in tRNA(Thr) + S-adenosyl-L-methionine = N(3)-methylcytidine(32) in tRNA(Thr) + S-adenosyl-L-homocysteine + H(+). It carries out the reaction cytidine(32) in tRNA(Arg)(CCU) + S-adenosyl-L-methionine = N(3)-methylcytidine(32) in tRNA(Arg)(CCU) + S-adenosyl-L-homocysteine + H(+). In terms of biological role, S-adenosyl-L-methionine-dependent methyltransferase that mediates N(3)-methylcytidine modification of residue 32 of the tRNA anticodon loop of tRNA(Thr)(UGU) and tRNA(Arg)(CCU). N(3)-methylcytidine methylation by METTL2 requires the N6-threonylcarbamoylation of tRNA (t6A37) by the EKC/KEOPS complex as prerequisite. The polypeptide is tRNA N(3)-cytidine methyltransferase METTL2 (METTL2) (Bos taurus (Bovine)).